The following is a 313-amino-acid chain: LOB domain-containing protein 36 (313 aa).

The region spanning 6-107 (SPCAACKFLR…HDLENAKKEL (102 aa)) is the LOB domain. The tract at residues 245–313 (GNFVDSPSTN…SEEGRRNVIG (69 aa)) is disordered. The segment covering 249–260 (DSPSTNNNYHTD) has biased composition (polar residues). Over residues 280 to 302 (PSQSSQPLPLQTQETQTQTQPNS) the composition is skewed to low complexity.

This sequence belongs to the LOB domain-containing protein family. Expressed in trichomes, at the base of many lateral organs, including branching points of the inflorescence and floral organs and in the distal part of the pistil at stages when style and stigma start to develop. Also detected in pedicels and at the base of petals and sepals.

Functionally, controls the proximal-distal patterning in petals and the adaxial-abaxial determination of leaves. Involved in the repression of the homeobox gene BP. This chain is LOB domain-containing protein 36 (LBD36), found in Arabidopsis thaliana (Mouse-ear cress).